The primary structure comprises 579 residues: Membrane frizzled-related protein (579 aa).

The Cytoplasmic segment spans residues methionine 1 to cysteine 69. A helical; Signal-anchor for type II membrane protein transmembrane segment spans residues valine 70–alanine 90. The Extracellular segment spans residues glutamine 91 to proline 579. A disordered region spans residues alanine 100–threonine 143. Over residues threonine 111–threonine 121 the composition is skewed to low complexity. Polar residues predominate over residues serine 122–threonine 143. Disulfide bonds link cysteine 144–cysteine 170 and cysteine 197–cysteine 216. The CUB 1 domain maps to cysteine 144–methionine 253. Asparagine 227 is a glycosylation site (N-linked (GlcNAc...) asparagine). The region spanning serine 259 to serine 295 is the LDL-receptor class A 1 domain. 5 cysteine pairs are disulfide-bonded: cysteine 260-cysteine 272, cysteine 267-cysteine 285, cysteine 279-cysteine 294, cysteine 301-cysteine 327, and cysteine 354-cysteine 377. Positions cysteine 301 to phenylalanine 414 constitute a CUB 2 domain. The N-linked (GlcNAc...) asparagine glycan is linked to asparagine 415. The LDL-receptor class A 2 domain maps to proline 420 to serine 455. 8 disulfide bridges follow: cysteine 421-cysteine 433, cysteine 428-cysteine 446, cysteine 440-cysteine 454, cysteine 466-cysteine 528, cysteine 474-cysteine 521, cysteine 512-cysteine 549, cysteine 538-cysteine 576, and cysteine 542-cysteine 564. Residues proline 461–proline 579 enclose the FZ domain.

As to quaternary structure, interacts with C1QTNF5. In terms of tissue distribution, specifically expressed in brain. Strongly expressed in medulla oblongata and to a lower extent in hippocampus and corpus callosum. Expressed in keratinocytes.

The protein resides in the apical cell membrane. Its function is as follows. May play a role in eye development. This is Membrane frizzled-related protein (MFRP) from Homo sapiens (Human).